We begin with the raw amino-acid sequence, 691 residues long: Elongation factor G (691 aa).

In terms of domain architecture, tr-type G spans 8–282 (ERVRNIGIAA…AVVDYLPAPV (275 aa)). Residues 17–24 (AHIDAGKT), 81–85 (DTPGH), and 135–138 (NKMD) contribute to the GTP site.

It belongs to the TRAFAC class translation factor GTPase superfamily. Classic translation factor GTPase family. EF-G/EF-2 subfamily.

The protein resides in the cytoplasm. Catalyzes the GTP-dependent ribosomal translocation step during translation elongation. During this step, the ribosome changes from the pre-translocational (PRE) to the post-translocational (POST) state as the newly formed A-site-bound peptidyl-tRNA and P-site-bound deacylated tRNA move to the P and E sites, respectively. Catalyzes the coordinated movement of the two tRNA molecules, the mRNA and conformational changes in the ribosome. The chain is Elongation factor G from Prochlorococcus marinus (strain MIT 9303).